Here is a 268-residue protein sequence, read N- to C-terminus: Shikimate dehydrogenase (NADP(+)) (268 aa).

Shikimate contacts are provided by residues 13–15 and T60; that span reads SLS. Residue K64 is the Proton acceptor of the active site. NADP(+) is bound at residue E76. Residues N85 and D100 each contribute to the shikimate site. NADP(+)-binding positions include 124 to 128, 148 to 153, and I209; these read GAGGA and NRTMAR. Y211 is a shikimate binding site. G232 lines the NADP(+) pocket.

This sequence belongs to the shikimate dehydrogenase family. As to quaternary structure, homodimer.

The catalysed reaction is shikimate + NADP(+) = 3-dehydroshikimate + NADPH + H(+). It participates in metabolic intermediate biosynthesis; chorismate biosynthesis; chorismate from D-erythrose 4-phosphate and phosphoenolpyruvate: step 4/7. In terms of biological role, involved in the biosynthesis of the chorismate, which leads to the biosynthesis of aromatic amino acids. Catalyzes the reversible NADPH linked reduction of 3-dehydroshikimate (DHSA) to yield shikimate (SA). The polypeptide is Shikimate dehydrogenase (NADP(+)) (Staphylococcus aureus (strain MRSA252)).